Reading from the N-terminus, the 358-residue chain is uncharacterized protein (358 aa).

ATP is bound at residue Gly29–Thr36.

This sequence belongs to the archaeal ATPase family.

This is an uncharacterized protein from Methanocaldococcus jannaschii (strain ATCC 43067 / DSM 2661 / JAL-1 / JCM 10045 / NBRC 100440) (Methanococcus jannaschii).